We begin with the raw amino-acid sequence, 395 residues long: 8-amino-3,8-dideoxy-alpha-D-manno-octulosonate transaminase (395 aa).

Residue Lys186 is modified to N6-(pyridoxal phosphate)lysine.

The protein belongs to the DegT/DnrJ/EryC1 family. The cofactor is pyridoxal 5'-phosphate.

The catalysed reaction is 8-amino-3,8-dideoxy-alpha-D-manno-octulosonate + 2-oxoglutarate = 3,8-dideoxy-8-oxo-alpha-D-manno-octulosonate + L-glutamate. Its pathway is bacterial outer membrane biogenesis; lipopolysaccharide biosynthesis. Its function is as follows. Catalyzes the second (last) step of the biosynthesis of Kdo8N (8-amino-3,8-dideoxy-D-manno-octulosonate) from Kdo (3-deoxy-D-manno-octulosonate). The sequence is that of 8-amino-3,8-dideoxy-alpha-D-manno-octulosonate transaminase from Shewanella oneidensis (strain ATCC 700550 / JCM 31522 / CIP 106686 / LMG 19005 / NCIMB 14063 / MR-1).